Consider the following 317-residue polypeptide: Adenosine receptor A3 (317 aa).

The Extracellular segment spans residues 1–14 (MPVNSTAVSWTSVT). The N-linked (GlcNAc...) asparagine glycan is linked to Asn-4. Residues 15–37 (YITVEILIGLCAIVGNVLVIWVV) form a helical membrane-spanning segment. Residues 38–48 (KLNPSLQTTTF) lie on the Cytoplasmic side of the membrane. The chain crosses the membrane as a helical span at residues 49-72 (YFIVSLALADIAVGVLVMPLAIVI). The Extracellular portion of the chain corresponds to 73 to 84 (SLGVTIHFYSCL). An intrachain disulfide couples Cys-83 to Cys-165. The chain crosses the membrane as a helical span at residues 85 to 106 (FMTCLMLIFTHASIMSLLAIAV). Residues 107 to 126 (DRYLRVKLTVRYRRVTTQRR) are Cytoplasmic-facing. A helical membrane pass occupies residues 127 to 148 (IWLALGLCWLVSFLVGLTPMFG). Residues 149–176 (WNMKLSSADENLTFLPCRFRSVMRMDYM) are Extracellular-facing. A glycan (N-linked (GlcNAc...) asparagine) is linked at Asn-159. A helical membrane pass occupies residues 177–197 (VYFSFFLWILVPLVVMCAIYF). The Cytoplasmic portion of the chain corresponds to 198–230 (DIFYIIRNRLSQSFSGSRETGAFYGREFKTAKS). Residues 231 to 254 (LLLVLFLFALCWLPLSIINCILYF) form a helical membrane-spanning segment. Over 255 to 260 (DGQVPQ) the chain is Extracellular. The chain crosses the membrane as a helical span at residues 261–283 (TVLYLGILLSHANSMMNPIVYAY). Topologically, residues 284–317 (KIKKFKETYLLILKACVMCQPSKSMDPSTEQTSE) are cytoplasmic. Cys-302 is lipidated: S-palmitoyl cysteine.

It belongs to the G-protein coupled receptor 1 family. In terms of processing, phosphorylation on Thr-315 and Ser-316 may be crucial for rapid desensitization. Phosphorylation on Thr-315 may be necessary for phosphorylation on Ser-316 to occur. As to expression, most abundant in lung, spleen and pineal gland. Moderate expression in brain, kidney and testis.

It is found in the cell membrane. In terms of biological role, receptor for adenosine. The activity of this receptor is mediated by G proteins which inhibits adenylyl cyclase. This Ovis aries (Sheep) protein is Adenosine receptor A3 (ADORA3).